The following is a 316-amino-acid chain: UPF0613 protein PB24D3.06c (316 aa).

It belongs to the UPF0613 family.

The protein localises to the cytoplasm. Its subcellular location is the nucleus. The chain is UPF0613 protein PB24D3.06c from Schizosaccharomyces pombe (strain 972 / ATCC 24843) (Fission yeast).